The following is a 264-amino-acid chain: Phosphatidylinositol transfer protein 1 (264 aa).

A disordered region spans residues 151 to 174; that stretch reads NYKETEDPTKIRSEKANRGPLEEE. Residues 238 to 264 are a coiled coil; sequence VRAFELKTKEDLKKKLEEKDENKAAEK.

This sequence belongs to the PtdIns transfer protein family. PI transfer class I subfamily. Post-translationally, phosphorylated in response to activation of rasG.

It is found in the cytoplasm. It localises to the golgi apparatus. Functionally, catalyzes the transfer of PtdIns and phosphatidylcholine between membranes. The chain is Phosphatidylinositol transfer protein 1 (pitA) from Dictyostelium discoideum (Social amoeba).